Consider the following 447-residue polypeptide: Argininosuccinate synthase (447 aa).

ATP is bound by residues 20-28 (AFSGGLDTS) and alanine 46. L-citrulline is bound at residue tyrosine 102. 2 residues coordinate ATP: glycine 132 and threonine 134. Threonine 134, asparagine 138, and aspartate 139 together coordinate L-aspartate. Asparagine 138 contacts L-citrulline. Residue aspartate 139 coordinates ATP. L-citrulline-binding residues include arginine 142 and serine 195. Residue aspartate 197 coordinates ATP. L-citrulline-binding residues include threonine 204, glutamate 206, and glutamate 283.

It belongs to the argininosuccinate synthase family. Type 2 subfamily. Homotetramer.

Its subcellular location is the cytoplasm. The catalysed reaction is L-citrulline + L-aspartate + ATP = 2-(N(omega)-L-arginino)succinate + AMP + diphosphate + H(+). It participates in amino-acid biosynthesis; L-arginine biosynthesis; L-arginine from L-ornithine and carbamoyl phosphate: step 2/3. This chain is Argininosuccinate synthase, found in Neisseria gonorrhoeae (strain ATCC 700825 / FA 1090).